The primary structure comprises 422 residues: S100P-binding protein (422 aa).

Disordered stretches follow at residues 1-28 (MMCS…SWSS), 61-135 (LKDD…TPAK), and 170-292 (YVSE…DSGK). Residues 80–90 (DDSRNVEKGEK) are compositionally biased toward basic and acidic residues. Ser-195 is subject to Phosphoserine. A compositionally biased stretch (basic and acidic residues) spans 231–241 (VSDKNMSDSKK). Residues 255-269 (TPNTGSSRRNGSYKS) show a composition bias toward polar residues. Residues 274 to 283 (KLPVSSSSSK) are compositionally biased toward low complexity.

In terms of assembly, interacts with S100P.

It localises to the nucleus. The protein is S100P-binding protein of Bos taurus (Bovine).